A 167-amino-acid polypeptide reads, in one-letter code: Caltractin (167 aa).

Residues 1-18 are compositionally biased toward basic residues; it reads MSSARTVRKDKPRGRHHG. Positions 1–23 are disordered; it reads MSSARTVRKDKPRGRHHGLTQQK. EF-hand domains follow at residues 22–57, 58–93, 95–130, and 131–166; these read QKRQ…LGFE, MTEE…KIGE, DTKE…LGEN, and FTVK…TSYA. D35, D37, S39, T41, E46, D71, D73, S75, E82, D108, D110, N112, K114, D119, D144, D146, D148, E150, and E155 together coordinate Ca(2+).

This sequence belongs to the centrin family.

The protein localises to the cytoplasm. It is found in the cytoskeleton. Its subcellular location is the microtubule organizing center. Functionally, plays a fundamental role in microtubule-organizing center structure and function. The chain is Caltractin from Atriplex nummularia (Old man saltbush).